Reading from the N-terminus, the 229-residue chain is MDSKGSAQKGSRLLLLLVVSNLLLCQGVVSTPVCPNGPGNCQVSLRDLFDRAVMVSHYIHNLSSEMFNEFDKRYAQGKGFITMALNSCHTSSLPTPEDKEQAQQTHHEVLMSLILGLLRSWNDPLYHLVTEVRGMKGVPDAILSRAIEIEEENKRLLEGMEMIFGQVIPGAKETEPYPVWSGLPSLQTKDEDARHSAFYNLLHCLRRDSSKIDTYLKLLNCRIIYNNNC.

Residues 1–30 form the signal peptide; sequence MDSKGSAQKGSRLLLLLVVSNLLLCQGVVS. A disulfide bridge links Cys-34 with Cys-41. Ser-56 carries the phosphoserine modification. A glycan (N-linked (GlcNAc...) asparagine; partial) is linked at Asn-61. Residues Ser-64 and Ser-120 each carry the phosphoserine modification. Disulfide bonds link Cys-88-Cys-204 and Cys-221-Cys-229.

The protein belongs to the somatotropin/prolactin family. As to quaternary structure, interacts with PRLR.

The protein localises to the secreted. Functionally, prolactin acts primarily on the mammary gland by promoting lactation, mammogenesis, mitogenesis and osmoregulation. This chain is Prolactin (PRL), found in Ovis aries (Sheep).